A 399-amino-acid chain; its full sequence is CCA-adding enzyme (399 aa).

ATP-binding residues include Gly32 and Arg35. Gly32 and Arg35 together coordinate CTP. Asp45 and Asp47 together coordinate Mg(2+). ATP contacts are provided by Arg116, Asp159, Arg162, Arg165, and Arg168. 5 residues coordinate CTP: Arg116, Asp159, Arg162, Arg165, and Arg168.

This sequence belongs to the tRNA nucleotidyltransferase/poly(A) polymerase family. Bacterial CCA-adding enzyme type 3 subfamily. In terms of assembly, homodimer. It depends on Mg(2+) as a cofactor.

It catalyses the reaction a tRNA precursor + 2 CTP + ATP = a tRNA with a 3' CCA end + 3 diphosphate. The enzyme catalyses a tRNA with a 3' CCA end + 2 CTP + ATP = a tRNA with a 3' CCACCA end + 3 diphosphate. In terms of biological role, catalyzes the addition and repair of the essential 3'-terminal CCA sequence in tRNAs without using a nucleic acid template. Adds these three nucleotides in the order of C, C, and A to the tRNA nucleotide-73, using CTP and ATP as substrates and producing inorganic pyrophosphate. tRNA 3'-terminal CCA addition is required both for tRNA processing and repair. Also involved in tRNA surveillance by mediating tandem CCA addition to generate a CCACCA at the 3' terminus of unstable tRNAs. While stable tRNAs receive only 3'-terminal CCA, unstable tRNAs are marked with CCACCA and rapidly degraded. This Streptococcus sanguinis (strain SK36) protein is CCA-adding enzyme.